Reading from the N-terminus, the 769-residue chain is Ligand-dependent nuclear receptor-interacting factor 1 (769 aa).

Glycyl lysine isopeptide (Lys-Gly) (interchain with G-Cter in SUMO2) cross-links involve residues K259 and K279. The span at 378-387 (QIDQQNSVSP) shows a compositional bias: polar residues. Residues 378–400 (QIDQQNSVSPDTPVRKDTLQTVS) form a disordered region. Residues S402, S430, and S436 each carry the phosphoserine modification. K446 participates in a covalent cross-link: Glycyl lysine isopeptide (Lys-Gly) (interchain with G-Cter in SUMO2). Position 502 is a phosphoserine (S502). Residues 528 to 562 (DQEPKIHNEMASTSDKGAQGRNDKKDSQGRSNKAL) are disordered. A PxVxL motif motif is present at residues 580 to 584 (LRVCL). Residue S599 is modified to Phosphoserine. Residue K605 forms a Glycyl lysine isopeptide (Lys-Gly) (interchain with G-Cter in SUMO2) linkage. 2 consecutive short sequence motifs (nuclear localization signal) follow at residues 628–631 (KKRK) and 642–645 (KKRK). A Glycyl lysine isopeptide (Lys-Gly) (interchain with G-Cter in SUMO2) cross-link involves residue K702. A Phosphothreonine modification is found at T732. The stretch at 740 to 769 (IRDEKIRRLKQVLREKEAALEEMRKKMHQK) forms a coiled coil.

It belongs to the LRIF1 family. As to quaternary structure, interacts with RARA. Interacts with SMCHD1; leading to recruitment to inactivated chromosome X in females. Interacts (via PxVxL motif) with HP1 (CBX1/HP1-beta, CBX3/HP1-gamma and CBX5/HP1-alpha). As to expression, widely expressed, with the highest expression levels in heart, liver and placenta.

Its subcellular location is the chromosome. It localises to the nucleus matrix. In terms of biological role, together with SMCHD1, involved in chromosome X inactivation in females by promoting the compaction of heterochromatin. Also able to repress the ligand-induced transcriptional activity of retinoic acid receptor alpha (RARA), possibly through direct recruitment of histone deacetylases. Also required for silencing of the DUX4 locus in somatic cells. In Homo sapiens (Human), this protein is Ligand-dependent nuclear receptor-interacting factor 1.